A 330-amino-acid chain; its full sequence is DNA-directed RNA polymerase subunit alpha (330 aa).

The segment at 1–231 (MQTNLLKPKT…EQLAVFAQLE (231 aa)) is alpha N-terminal domain (alpha-NTD). The alpha C-terminal domain (alpha-CTD) stretch occupies residues 250-330 (FDPILLRPVD…NWPPAGLDKR (81 aa)).

This sequence belongs to the RNA polymerase alpha chain family. Homodimer. The RNAP catalytic core consists of 2 alpha, 1 beta, 1 beta' and 1 omega subunit. When a sigma factor is associated with the core the holoenzyme is formed, which can initiate transcription.

It carries out the reaction RNA(n) + a ribonucleoside 5'-triphosphate = RNA(n+1) + diphosphate. Functionally, DNA-dependent RNA polymerase catalyzes the transcription of DNA into RNA using the four ribonucleoside triphosphates as substrates. This Paracidovorax citrulli (strain AAC00-1) (Acidovorax citrulli) protein is DNA-directed RNA polymerase subunit alpha.